We begin with the raw amino-acid sequence, 333 residues long: UDP-glucose 4-epimerase (333 aa).

NAD(+) is bound by residues 11–12 (YI), 32–37 (DSLVTG), 52–53 (DL), 75–79 (FAAYS), N94, T119, Y143, K147, and F171. T119 and Y143 together coordinate substrate. Residue Y143 is the Proton acceptor of the active site. Substrate-binding positions include N172, 191-192 (HL), 208-210 (MIF), R223, and 284-287 (RSGD).

This sequence belongs to the NAD(P)-dependent epimerase/dehydratase family. Homodimer. NAD(+) is required as a cofactor.

It catalyses the reaction UDP-alpha-D-glucose = UDP-alpha-D-galactose. Its pathway is carbohydrate metabolism; galactose metabolism. Its function is as follows. Involved in the metabolism of galactose. Catalyzes the conversion of UDP-galactose (UDP-Gal) to UDP-glucose (UDP-Glc) through a mechanism involving the transient reduction of NAD. The polypeptide is UDP-glucose 4-epimerase (galE) (Streptococcus mutans serotype c (strain ATCC 700610 / UA159)).